We begin with the raw amino-acid sequence, 509 residues long: Coiled-coil domain-containing protein 181 (509 aa).

The span at 60-82 (EHTKQHSDPDKSLQDDVSPRRND) shows a compositional bias: basic and acidic residues. Disordered stretches follow at residues 60-121 (EHTK…EEDE) and 285-367 (GEPL…EEKE). A compositionally biased stretch (polar residues) spans 320 to 334 (RTQSARISPVTSTYC). Residues 335–375 (LSPRQKELQKQLEQKREKLKREEEQRKIEEEKEKKRENDIV) adopt a coiled-coil conformation. The segment covering 338-367 (RQKELQKQLEQKREKLKREEEQRKIEEEKE) has biased composition (basic and acidic residues).

Belongs to the CCDC181 family. In terms of assembly, homodimer. Interacts with HOOK1. Interacts with HOOK2. Interacts with HOOK3.

The protein localises to the cytoplasm. It localises to the cytoskeleton. Its subcellular location is the cell projection. It is found in the cilium. The protein resides in the flagellum. Functionally, microtubule-binding protein that localizes to the microtubular manchette of elongating spermatids. The polypeptide is Coiled-coil domain-containing protein 181 (Macaca fascicularis (Crab-eating macaque)).